The following is a 120-amino-acid chain: UPF0102 protein Pfl01_4685 (120 aa).

It belongs to the UPF0102 family.

The chain is UPF0102 protein Pfl01_4685 from Pseudomonas fluorescens (strain Pf0-1).